Here is a 338-residue protein sequence, read N- to C-terminus: Phenylalanine--tRNA ligase alpha subunit (338 aa).

E253 contacts Mg(2+).

Belongs to the class-II aminoacyl-tRNA synthetase family. Phe-tRNA synthetase alpha subunit type 1 subfamily. As to quaternary structure, tetramer of two alpha and two beta subunits. Mg(2+) serves as cofactor.

The protein resides in the cytoplasm. It carries out the reaction tRNA(Phe) + L-phenylalanine + ATP = L-phenylalanyl-tRNA(Phe) + AMP + diphosphate + H(+). This is Phenylalanine--tRNA ligase alpha subunit from Trichlorobacter lovleyi (strain ATCC BAA-1151 / DSM 17278 / SZ) (Geobacter lovleyi).